The primary structure comprises 530 residues: Pentatricopeptide repeat-containing protein At3g51320 (530 aa).

10 PPR repeats span residues 82 to 116 (KLYC…GFVP), 117 to 151 (DSYT…GCDQ), 152 to 182 (VLPV…IPKR), 183 to 217 (DIVS…NIIS), 218 to 248 (WNIM…GFQG), 249 to 283 (NEST…FLNS), 284 to 314 (SVVI…LSIR), 315 to 349 (NKVT…MLRP), 350 to 380 (DEVT…MVDE), and 386 to 420 (NFGH…DVTP). Residues 424 to 499 (KWANLLSSSR…IPGCGLVDLK (76 aa)) form a type E motif region.

This sequence belongs to the PPR family. PCMP-E subfamily.

This chain is Pentatricopeptide repeat-containing protein At3g51320, found in Arabidopsis thaliana (Mouse-ear cress).